A 465-amino-acid chain; its full sequence is ATP synthase subunit beta (465 aa).

153–160 (GGAGVGKT) lines the ATP pocket.

It belongs to the ATPase alpha/beta chains family. F-type ATPases have 2 components, CF(1) - the catalytic core - and CF(0) - the membrane proton channel. CF(1) has five subunits: alpha(3), beta(3), gamma(1), delta(1), epsilon(1). CF(0) has three main subunits: a(1), b(2) and c(9-12). The alpha and beta chains form an alternating ring which encloses part of the gamma chain. CF(1) is attached to CF(0) by a central stalk formed by the gamma and epsilon chains, while a peripheral stalk is formed by the delta and b chains.

The protein resides in the cell membrane. It catalyses the reaction ATP + H2O + 4 H(+)(in) = ADP + phosphate + 5 H(+)(out). Functionally, produces ATP from ADP in the presence of a proton gradient across the membrane. The catalytic sites are hosted primarily by the beta subunits. This Clostridium perfringens (strain ATCC 13124 / DSM 756 / JCM 1290 / NCIMB 6125 / NCTC 8237 / Type A) protein is ATP synthase subunit beta.